The primary structure comprises 328 residues: GTPase Obg (328 aa).

The region spanning 2 to 160 (YNFKDSVSIT…LNVRLELFLV (159 aa)) is the Obg domain. Residues 161–326 (ADIGLVGLPN…LIKEFFVLAK (166 aa)) form the OBG-type G domain. GTP-binding positions include 167-174 (GLPNAGKS), 192-196 (FTTKI), 213-216 (DIPG), 280-283 (NKLD), and 307-309 (SIY). Ser-174 and Thr-194 together coordinate Mg(2+).

Belongs to the TRAFAC class OBG-HflX-like GTPase superfamily. OBG GTPase family. Monomer. Mg(2+) is required as a cofactor.

The protein resides in the cytoplasm. Functionally, an essential GTPase which binds GTP, GDP and possibly (p)ppGpp with moderate affinity, with high nucleotide exchange rates and a fairly low GTP hydrolysis rate. Plays a role in control of the cell cycle, stress response, ribosome biogenesis and in those bacteria that undergo differentiation, in morphogenesis control. This is GTPase Obg from Borreliella afzelii (strain PKo) (Borrelia afzelii).